We begin with the raw amino-acid sequence, 798 residues long: Protocadherin beta-13 (798 aa).

A signal peptide spans 1–28; sequence MEASGKLICRQRQVLFSFLLLGLSLAGA. Topologically, residues 29 to 690 are extracellular; that stretch reads AEPRSYSVVE…AQADSLTVYL (662 aa). 5 Cadherin domains span residues 36–134, 139–243, 248–348, 353–451, and 456–561; these read VVEE…SPVF, MLVK…APEF, YRVQ…APEV, FTSP…APAF, and YTLF…SPFV. N-linked (GlcNAc...) asparagine glycosylation is found at Asn418 and Asn436. N-linked (GlcNAc...) asparagine glycosylation is present at Asn567. Residues 568-671 enclose the Cadherin 6 domain; that stretch reads GSAPCTELVP…LVDGFSQPYL (104 aa). The helical transmembrane segment at 691 to 711 threads the bilayer; that stretch reads VVALASVSSLFLFSVLLFVAV. Residues 712-798 are Cytoplasmic-facing; sequence RLCRRSRAAS…FPNNFGFNIQ (87 aa).

Its subcellular location is the cell membrane. Functionally, potential calcium-dependent cell-adhesion protein. May be involved in the establishment and maintenance of specific neuronal connections in the brain. The protein is Protocadherin beta-13 (PCDHB13) of Pan troglodytes (Chimpanzee).